We begin with the raw amino-acid sequence, 446 residues long: Putative diacyglycerol O-acyltransferase MT3481 (446 aa).

Histidine 129 acts as the Proton acceptor in catalysis. Residues 425–446 (SRALPSAARRGRPSVPTARARH) are disordered.

It belongs to the long-chain O-acyltransferase family.

The catalysed reaction is an acyl-CoA + a 1,2-diacyl-sn-glycerol = a triacyl-sn-glycerol + CoA. The protein operates within glycerolipid metabolism; triacylglycerol biosynthesis. This chain is Putative diacyglycerol O-acyltransferase MT3481, found in Mycobacterium tuberculosis (strain CDC 1551 / Oshkosh).